The primary structure comprises 477 residues: Bifunctional protein HldE (477 aa).

The interval 1–318 (MKVTLPEFER…ENAVRGRAET (318 aa)) is ribokinase. 195-198 (NLSE) provides a ligand contact to ATP. Residue Asp264 is part of the active site. A cytidylyltransferase region spans residues 344–477 (MTNGVFDILH…IKKIQKDSDK (134 aa)).

In the N-terminal section; belongs to the carbohydrate kinase PfkB family. The protein in the C-terminal section; belongs to the cytidylyltransferase family. Homodimer.

It carries out the reaction D-glycero-beta-D-manno-heptose 7-phosphate + ATP = D-glycero-beta-D-manno-heptose 1,7-bisphosphate + ADP + H(+). It catalyses the reaction D-glycero-beta-D-manno-heptose 1-phosphate + ATP + H(+) = ADP-D-glycero-beta-D-manno-heptose + diphosphate. It participates in nucleotide-sugar biosynthesis; ADP-L-glycero-beta-D-manno-heptose biosynthesis; ADP-L-glycero-beta-D-manno-heptose from D-glycero-beta-D-manno-heptose 7-phosphate: step 1/4. The protein operates within nucleotide-sugar biosynthesis; ADP-L-glycero-beta-D-manno-heptose biosynthesis; ADP-L-glycero-beta-D-manno-heptose from D-glycero-beta-D-manno-heptose 7-phosphate: step 3/4. In terms of biological role, catalyzes the phosphorylation of D-glycero-D-manno-heptose 7-phosphate at the C-1 position to selectively form D-glycero-beta-D-manno-heptose-1,7-bisphosphate. Functionally, catalyzes the ADP transfer from ATP to D-glycero-beta-D-manno-heptose 1-phosphate, yielding ADP-D-glycero-beta-D-manno-heptose. The chain is Bifunctional protein HldE from Klebsiella pneumoniae subsp. pneumoniae (strain ATCC 700721 / MGH 78578).